We begin with the raw amino-acid sequence, 262 residues long: Methionine-rich nacre protein (262 aa).

A signal peptide spans 1–22; the sequence is MSIMRRILCLAVVIFIINDVSS. Low complexity predominate over residues 26-35; sequence GNNKNWKKNG. The segment at 26–84 is disordered; it reads GNNKNWKKNGMSLSSPGNKKPTGNNAVPQKSKMNNMNQNSLSQPKRSSPPGNSMYNMAN. Polar residues predominate over residues 36 to 84; it reads MSLSSPGNKKPTGNNAVPQKSKMNNMNQNSLSQPKRSSPPGNSMYNMAN.

In terms of tissue distribution, expressed in mantle and, after secretion, incorporated into acid-insoluble nacre matrix of the shell (at protein level). Expressed primarily in the mantle with highest level in the mantle pallium and lower level in the mantle edge.

It is found in the secreted. The protein is Methionine-rich nacre protein of Pinctada maxima (Silver-lipped pearl oyster).